A 332-amino-acid polypeptide reads, in one-letter code: ADP-L-glycero-D-manno-heptose-6-epimerase (332 aa).

Residues 10–11, 31–32, Lys-38, Lys-53, 75–79, and Asn-92 contribute to the NADP(+) site; these read MI, DK, and MGACS. Tyr-145 acts as the Proton acceptor in catalysis. Lys-149 lines the NADP(+) pocket. A substrate-binding site is contributed by Asn-173. NADP(+) contacts are provided by Val-174 and Lys-182. Lys-182 functions as the Proton acceptor in the catalytic mechanism. Substrate-binding positions include Arg-184, His-191, 205–208, Arg-219, and Tyr-290; that span reads FKSY.

This sequence belongs to the NAD(P)-dependent epimerase/dehydratase family. HldD subfamily. In terms of assembly, homopentamer. NADP(+) serves as cofactor.

It carries out the reaction ADP-D-glycero-beta-D-manno-heptose = ADP-L-glycero-beta-D-manno-heptose. Its pathway is nucleotide-sugar biosynthesis; ADP-L-glycero-beta-D-manno-heptose biosynthesis; ADP-L-glycero-beta-D-manno-heptose from D-glycero-beta-D-manno-heptose 7-phosphate: step 4/4. Its function is as follows. Catalyzes the interconversion between ADP-D-glycero-beta-D-manno-heptose and ADP-L-glycero-beta-D-manno-heptose via an epimerization at carbon 6 of the heptose. In Fusobacterium nucleatum subsp. nucleatum (strain ATCC 25586 / DSM 15643 / BCRC 10681 / CIP 101130 / JCM 8532 / KCTC 2640 / LMG 13131 / VPI 4355), this protein is ADP-L-glycero-D-manno-heptose-6-epimerase.